We begin with the raw amino-acid sequence, 333 residues long: MTKPIEKNMLRSRAIKLPEVTESMWEQVDEEHRNLVQEFLDAHSFRDKTRKQYYSSLRQFFWWVHTSLNGKKLYKISKRDFIRYQSFLKNRGMSSSGIALKKAGVSSLNNYIENVVAEDDHNYEKFRNFTRGLPAIPKTTTYEKVKVTYDDYKLMMDALKEDENYLGMAWLATAFNVGGRRAELIQLKTEILDYPVPEGQSYVMSHKVFGKGKGEGKPLEYMINTEALEYLRLWHEKRGYDHEYLFTTQYGGEPKQMSESWADYFCSDVLSDILGRRINPHLFKASCITYLLEVKKVKIELISKYVAHHEDVSTTIKHYDLRDFEEEKNQIFV.

Positions 30–113 constitute a Core-binding (CB) domain; the sequence is EEHRNLVQEF…GVSSLNNYIE (84 aa). One can recognise a Tyr recombinase domain in the interval 142–332; it reads YEKVKVTYDD…DFEEEKNQIF (191 aa). Active-site residues include Arg-180, Lys-211, His-281, and His-308. The active-site O-(3'-phospho-DNA)-tyrosine intermediate is the Tyr-319.

Belongs to the 'phage' integrase family.

This Bacillus subtilis (strain 168) protein is SPbeta prophage-derived recombinase-like protein YomM (yomM).